Here is a 529-residue protein sequence, read N- to C-terminus: Bifunctional purine biosynthesis protein PurH (529 aa).

In terms of domain architecture, MGS-like spans 1–148 (MQQRRPVRRA…KNHKDVAIVV (148 aa)). At lysine 287 the chain carries N6-acetyllysine.

It belongs to the PurH family.

It catalyses the reaction (6R)-10-formyltetrahydrofolate + 5-amino-1-(5-phospho-beta-D-ribosyl)imidazole-4-carboxamide = 5-formamido-1-(5-phospho-D-ribosyl)imidazole-4-carboxamide + (6S)-5,6,7,8-tetrahydrofolate. The enzyme catalyses IMP + H2O = 5-formamido-1-(5-phospho-D-ribosyl)imidazole-4-carboxamide. The protein operates within purine metabolism; IMP biosynthesis via de novo pathway; 5-formamido-1-(5-phospho-D-ribosyl)imidazole-4-carboxamide from 5-amino-1-(5-phospho-D-ribosyl)imidazole-4-carboxamide (10-formyl THF route): step 1/1. Its pathway is purine metabolism; IMP biosynthesis via de novo pathway; IMP from 5-formamido-1-(5-phospho-D-ribosyl)imidazole-4-carboxamide: step 1/1. The polypeptide is Bifunctional purine biosynthesis protein PurH (Escherichia coli O6:H1 (strain CFT073 / ATCC 700928 / UPEC)).